The primary structure comprises 276 residues: Large ribosomal subunit protein uL2 (276 aa).

A disordered region spans residues 225–276 (VMNPVDHPHGGGEGKTAAGRDPVSPWGTPTKGYRTRSNKRTDSMIVQKRHKR).

This sequence belongs to the universal ribosomal protein uL2 family. Part of the 50S ribosomal subunit. Forms a bridge to the 30S subunit in the 70S ribosome.

One of the primary rRNA binding proteins. Required for association of the 30S and 50S subunits to form the 70S ribosome, for tRNA binding and peptide bond formation. It has been suggested to have peptidyltransferase activity; this is somewhat controversial. Makes several contacts with the 16S rRNA in the 70S ribosome. This Cupriavidus taiwanensis (strain DSM 17343 / BCRC 17206 / CCUG 44338 / CIP 107171 / LMG 19424 / R1) (Ralstonia taiwanensis (strain LMG 19424)) protein is Large ribosomal subunit protein uL2.